A 180-amino-acid polypeptide reads, in one-letter code: Oligoribonuclease (180 aa).

Positions 7 to 170 (LIWIDLEMTG…DDIRESIAEL (164 aa)) constitute an Exonuclease domain. Tyr-128 is a catalytic residue.

It belongs to the oligoribonuclease family.

The protein localises to the cytoplasm. 3'-to-5' exoribonuclease specific for small oligoribonucleotides. This chain is Oligoribonuclease, found in Ectopseudomonas mendocina (strain ymp) (Pseudomonas mendocina).